The following is a 209-amino-acid chain: Lectin (209 aa).

As to quaternary structure, homodimer; non-covalently linked.

In terms of biological role, binds chito-oligosaccherides. Has hemagglutinating activity towards rabbit erythrocytes. The protein is Lectin of Luffa acutangula (Ridged gourd).